We begin with the raw amino-acid sequence, 90 residues long: Chromosomal protein MC1c (90 aa).

Protects DNA against thermal denaturation and modulates transcription. In Methanothrix soehngenii (Methanosaeta concilii), this protein is Chromosomal protein MC1c.